The chain runs to 447 residues: NADP-specific glutamate dehydrogenase (447 aa).

The substrate site is built by Lys-92, Gln-113, and Lys-116. Lys-128 serves as the catalytic Proton donor. Gly-167 provides a ligand contact to substrate. Thr-211 and Asn-242 together coordinate NADP(+). Residue Ser-380 participates in substrate binding.

This sequence belongs to the Glu/Leu/Phe/Val dehydrogenases family. As to quaternary structure, homohexamer.

It carries out the reaction L-glutamate + NADP(+) + H2O = 2-oxoglutarate + NH4(+) + NADPH + H(+). Catalyzes the reversible oxidative deamination of glutamate to alpha-ketoglutarate and ammonia. The protein is NADP-specific glutamate dehydrogenase (gdhA) of Salmonella typhi.